The chain runs to 141 residues: Nucleoside diphosphate kinase (141 aa).

ATP is bound by residues K11, F59, R87, T93, R104, and N114. Catalysis depends on H117, which acts as the Pros-phosphohistidine intermediate.

The protein belongs to the NDK family. Homotetramer. Requires Mg(2+) as cofactor.

It is found in the cytoplasm. The catalysed reaction is a 2'-deoxyribonucleoside 5'-diphosphate + ATP = a 2'-deoxyribonucleoside 5'-triphosphate + ADP. It carries out the reaction a ribonucleoside 5'-diphosphate + ATP = a ribonucleoside 5'-triphosphate + ADP. Its function is as follows. Major role in the synthesis of nucleoside triphosphates other than ATP. The ATP gamma phosphate is transferred to the NDP beta phosphate via a ping-pong mechanism, using a phosphorylated active-site intermediate. The polypeptide is Nucleoside diphosphate kinase (Paraburkholderia phymatum (strain DSM 17167 / CIP 108236 / LMG 21445 / STM815) (Burkholderia phymatum)).